Consider the following 95-residue polypeptide: ISWPSYPGSEGIRSSNCQKKLNCGTKNIATKGVCKAFCLGRKRFWQKCGKNGSGSKGSKVCNAVLAHAVEKAGKGLIAVTDKAVAAIVKLAAGIA.

3 cysteine pairs are disulfide-bonded: Cys17–Cys38, Cys23–Cys34, and Cys48–Cys61.

The protein belongs to the worm cytolysin family.

It is found in the secreted. Its function is as follows. Permeabilizes a variety of cells. Forms large pores which allows the release of large proteins almost as rapidly as small organic molecules and inorganic ions. At sublytic concentrations, the toxin also inhibits protein kinase C and endogenous voltage-gated cation selective (sodium, calcium) channels occurring in the nervous and cardiovascular systems. The protein is Cerebratulus toxin A-III of Cerebratulus lacteus (Milky ribbon worm).